The primary structure comprises 323 residues: MADLDKLNIDSIIQRLLEVRGSKPGKNVQLQENEIRGLCLKSREIFLSQPILLELEAPLKICGDIHGQYYDLLRLFEYGGFPPESNYLFLGDYVDRGKQSLETICLLLAYKIKYPENFFLLRGNHECASINRIYGFYDECKRRYNIKLWKTFTDCFNCLPIAAIVDEKIFCCHGGLSPDLQSMEQIRRIMRPTDVPDQGLLCDLLWSDPDKDVLGWGENDRGVSFTFGAEVVAKFLHKHDLDLICRAHQVVEDGYEFFAKRQLVTLFSAPNYCGEFDNAGAMMSVDETLMCSFQILKPAEKKKPNATRPVTPPRGMITKQAKK.

Ala2 carries the N-acetylalanine modification. Mn(2+) contacts are provided by Asp64, His66, Asp92, and Asn124. His125 serves as the catalytic Proton donor. Residues His173 and His248 each coordinate Mn(2+). The interval 302 to 323 (KKPNATRPVTPPRGMITKQAKK) is disordered. A phosphothreonine mark is found at Thr307 and Thr311.

Belongs to the PPP phosphatase family. PP-1 subfamily. In terms of assembly, PP1 comprises a catalytic subunit, PPP1CA, PPP1CB or PPP1CC, which is folded into its native form by inhibitor 2 and glycogen synthetase kinase 3, and then complexed to one or several targeting or regulatory subunits. PPP1R12A, PPP1R12B and PPP1R12C mediate binding to myosin. PPP1R3A (in skeletal muscle), PPP1R3B (in liver), PPP1R3C, PPP1R3D and PPP1R3F (in brain) mediate binding to glycogen. Interacts with cyanobacterial toxin microcystin; disulfide-linked. Interacts with PPP1R3B and PPP1R7. Isoform 2 interacts with SPZ1. Interacts with CDCA2. PPP1R15A and PPP1R15B mediate binding to EIF2S1. Part of a complex containing PPP1R15B, PP1 and NCK1/2. Interacts with IKFZ1; the interaction targets PPP1CC to pericentromeric heterochromatin, dephosphorylates IKAROS, stabilizes it and prevents it from degradation. Interacts with PPP1R42; the interaction is direct. Interacts with NOM1 and PPP1R8. Component of the PTW/PP1 phosphatase complex, composed of PPP1R10/PNUTS, TOX4, WDR82, and PPP1CA or PPP1CB or PPP1CC. Interacts with PPP1R8. Interacts with isoform 1 and isoform 4 NEK2. Interacts with URI1; the interaction is phosphorylation-dependent and occurs in a growth factor-dependent manner. Interacts with FOXP3. Interacts with TMEM225 (via RVxF motif). Interacts with MKI67. Interacts with RRP1B; this targets PPP1CC to the nucleolus. Interacts with PPP1R2B. Found in a complex with PPP1CA, PPP1CC, SHC1 and PEAK1. Interacts with DYNLT4. Interacts (via RVxF motif) with FIRRM; regulates PLK1 kinase activity. Interacts with the KNL1 complex subunit KNL1; the interaction is direct and mutually exclusive with KNL1 binding to microtubules. Component of the SHOC2-MRAS-PP1c (SMP) complex consisting of SHOC2, GTP-bound M-Ras/MRAS and the catalytic subunit of protein phosphatase 1 (either PPP1CA, PPP1CB or PPP1CC). SHOC2 and PP1c preferably bind M-Ras/MRAS, but they also bind K-Ras/KRAS, N-Ras/NRAS and H-Ras/HRAS; these interactions are GTP-dependent and both SHOC2 and PP1c are required to form a stable complex. Interacts with SHOC2 in the absence of Ras GTPases. Requires Mn(2+) as cofactor. In terms of processing, phosphorylated by NEK2.

It localises to the cytoplasm. Its subcellular location is the nucleus. The protein localises to the nucleolus. It is found in the nucleoplasm. The protein resides in the nucleus speckle. It localises to the chromosome. Its subcellular location is the centromere. The protein localises to the kinetochore. It is found in the cleavage furrow. The protein resides in the midbody. It localises to the mitochondrion. Its subcellular location is the cytoskeleton. The protein localises to the microtubule organizing center. The catalysed reaction is O-phospho-L-seryl-[protein] + H2O = L-seryl-[protein] + phosphate. It catalyses the reaction O-phospho-L-threonyl-[protein] + H2O = L-threonyl-[protein] + phosphate. Its activity is regulated as follows. Inactivated by binding to URI1. The phosphatase activity of the PPP1R15A-PP1 complex toward EIF2S1 is specifically inhibited by Salubrinal, a drug that protects cells from endoplasmic reticulum stress. In terms of biological role, protein phosphatase that associates with over 200 regulatory proteins to form highly specific holoenzymes which dephosphorylate hundreds of biological targets. Protein phosphatase 1 (PP1) is essential for cell division, and participates in the regulation of glycogen metabolism, muscle contractility and protein synthesis. Dephosphorylates RPS6KB1. Involved in regulation of ionic conductances and long-term synaptic plasticity. May play an important role in dephosphorylating substrates such as the postsynaptic density-associated Ca(2+)/calmodulin dependent protein kinase II. Component of the PTW/PP1 phosphatase complex, which plays a role in the control of chromatin structure and cell cycle progression during the transition from mitosis into interphase. In balance with CSNK1D and CSNK1E, determines the circadian period length, through the regulation of the speed and rhythmicity of PER1 and PER2 phosphorylation. May dephosphorylate CSNK1D and CSNK1E. Regulates the recruitment of the SKA complex to kinetochores. Dephosphorylates the 'Ser-418' residue of FOXP3 in regulatory T-cells (Treg) from patients with rheumatoid arthritis, thereby inactivating FOXP3 and rendering Treg cells functionally defective. Together with PPP1CA (PP1-alpha subunit), dephosphorylates IFIH1/MDA5 and RIG-I leading to their activation and a functional innate immune response. Core component of the SHOC2-MRAS-PP1c (SMP) holophosphatase complex that regulates the MAPK pathway activation. The SMP complex specifically dephosphorylates the inhibitory phosphorylation at 'Ser-259' of RAF1 kinase, 'Ser-365' of BRAF kinase and 'Ser-214' of ARAF kinase, stimulating their kinase activities. Dephosphorylates MKI67 at the onset of anaphase. The SMP complex enhances the dephosphorylation activity and substrate specificity of PP1c. This is Serine/threonine-protein phosphatase PP1-gamma catalytic subunit (PPP1CC) from Homo sapiens (Human).